The following is an 813-amino-acid chain: Ribonuclease R (813 aa).

One can recognise an RNB domain in the interval Arg260–Ala587. Lys544 is modified (N6-acetyllysine). The region spanning Gly644–Ile725 is the S1 motif domain. Residues Asn733–Glu813 are disordered. Basic and acidic residues-rich tracts occupy residues Thr737–Lys749 and Val761–Lys774. Basic residues predominate over residues Thr775–Ser791. Over residues Ala792 to Thr801 the composition is skewed to low complexity. Over residues Lys802–Glu813 the composition is skewed to basic residues.

Belongs to the RNR ribonuclease family. RNase R subfamily. In terms of assembly, monomer.

The protein resides in the cytoplasm. The enzyme catalyses Exonucleolytic cleavage in the 3'- to 5'-direction to yield nucleoside 5'-phosphates.. 3'-5' exoribonuclease that releases 5'-nucleoside monophosphates and is involved in maturation of structured RNAs. Required for the expression of virulence genes on the large plasmid of S.flexneri at the post-transcriptional level. The protein is Ribonuclease R of Shigella flexneri.